The sequence spans 517 residues: Putative lipase ATG15 (517 aa).

Topologically, residues 1 to 6 are cytoplasmic; it reads MRASTH. The helical; Signal-anchor for type II membrane protein transmembrane segment at 7 to 27 threads the bilayer; the sequence is SWLLLVVVLSLSSFTVNAVIL. Residues 28–517 lie on the Lumenal side of the membrane; that stretch reads EGLIPPRSHL…TNWHFTDETL (490 aa). Residues N187, N221, and N303 are each glycosylated (N-linked (GlcNAc...) asparagine). Residue S319 is the Charge relay system of the active site. A disordered region spans residues 466–499; that stretch reads GWRWPWHRGDSADDDGDSDEDTDEDDKLAVPKAR. Acidic residues predominate over residues 477-491; sequence ADDDGDSDEDTDEDD.

It belongs to the AB hydrolase superfamily. Lipase family. In terms of assembly, binds to both phosphatidylinositol (PI) and phosphatidylinositol 3,5-bisphosphate (PIP2).

It is found in the endosome. Its subcellular location is the multivesicular body membrane. The protein resides in the prevacuolar compartment membrane. The catalysed reaction is a triacylglycerol + H2O = a diacylglycerol + a fatty acid + H(+). Functionally, lipase which is essential for lysis of subvacuolar cytoplasm to vacuole targeted bodies and intravacuolar autophagic bodies. Involved in the lysis of intravacuolar multivesicular body (MVB) vesicles. The intravacuolar membrane disintegration by ATG15 is critical to life span extension. The chain is Putative lipase ATG15 (ATG15) from Mycosarcoma maydis (Corn smut fungus).